The primary structure comprises 158 residues: 2-C-methyl-D-erythritol 2,4-cyclodiphosphate synthase (158 aa).

A divalent metal cation is bound by residues D9 and H11. 4-CDP-2-C-methyl-D-erythritol 2-phosphate contacts are provided by residues 9–11 (DVH) and 35–36 (HS). H43 lines the a divalent metal cation pocket. 4-CDP-2-C-methyl-D-erythritol 2-phosphate-binding positions include 57 to 59 (DIG), 62 to 66 (FPDTD), 101 to 107 (AQKPKMA), 133 to 136 (TTTE), F140, and R143.

This sequence belongs to the IspF family. As to quaternary structure, homotrimer. A divalent metal cation is required as a cofactor.

The enzyme catalyses 4-CDP-2-C-methyl-D-erythritol 2-phosphate = 2-C-methyl-D-erythritol 2,4-cyclic diphosphate + CMP. It participates in isoprenoid biosynthesis; isopentenyl diphosphate biosynthesis via DXP pathway; isopentenyl diphosphate from 1-deoxy-D-xylulose 5-phosphate: step 4/6. Involved in the biosynthesis of isopentenyl diphosphate (IPP) and dimethylallyl diphosphate (DMAPP), two major building blocks of isoprenoid compounds. Catalyzes the conversion of 4-diphosphocytidyl-2-C-methyl-D-erythritol 2-phosphate (CDP-ME2P) to 2-C-methyl-D-erythritol 2,4-cyclodiphosphate (ME-CPP) with a corresponding release of cytidine 5-monophosphate (CMP). The sequence is that of 2-C-methyl-D-erythritol 2,4-cyclodiphosphate synthase from Geobacillus sp. (strain WCH70).